The primary structure comprises 37 residues: Large ribosomal subunit protein bL36c (37 aa).

Belongs to the bacterial ribosomal protein bL36 family.

The protein resides in the plastid. The protein localises to the chloroplast. This is Large ribosomal subunit protein bL36c from Ostreococcus tauri.